We begin with the raw amino-acid sequence, 110 residues long: Protein RALF-like 19 (110 aa).

Residues 1-23 form the signal peptide; that stretch reads MGIKILLILGLLTLAVVAESANA. Positions 24 to 58 are cleaved as a propeptide — removed in mature form; it reads TWTLTKSCVNGQGCIGEDGELDYLMDSETNRRQLA. 2 cysteine pairs are disulfide-bonded: cysteine 76–cysteine 86 and cysteine 99–cysteine 105.

This sequence belongs to the plant rapid alkalinization factor (RALF) family. Post-translationally, proteolytically cleaved, probably by S1P, a subtilisin-like serine protease (subtilase).

The protein localises to the secreted. Its function is as follows. Cell signaling peptide that may regulate plant stress, growth, and development. Mediates a rapid alkalinization of extracellular space by mediating a transient increase in the cytoplasmic Ca(2+) concentration leading to a calcium-dependent signaling events through a cell surface receptor and a concomitant activation of some intracellular mitogen-activated protein kinases. The protein is Protein RALF-like 19 (RALFL19) of Arabidopsis thaliana (Mouse-ear cress).